The chain runs to 375 residues: PTS system fructose-specific EIIC component (375 aa).

In terms of domain architecture, PTS EIIC type-2 spans 16-370; it reads VKEDLMTGVS…KPNFDAKMAA (355 aa). A run of 10 helical transmembrane segments spans residues 24–44, 68–88, 93–113, 122–142, 160–180, 203–223, 238–258, 279–299, 301–321, and 340–360; these read VSFM…GYAV, IGVA…AYAI, GLAP…LQAA, GSAG…GIVA, VLLI…FVLG, AILL…GPIN, VTAP…GLAL, VLLG…ADPA, VIPS…ALGV, and FMFI…ATAI.

The protein localises to the cell membrane. In terms of biological role, the phosphoenolpyruvate-dependent sugar phosphotransferase system (sugar PTS), a major carbohydrate active transport system, catalyzes the phosphorylation of incoming sugar substrates concomitantly with their translocation across the cell membrane. The enzyme II PtfABC PTS system is involved in fructose transport. The sequence is that of PTS system fructose-specific EIIC component from Haloferax volcanii (strain ATCC 29605 / DSM 3757 / JCM 8879 / NBRC 14742 / NCIMB 2012 / VKM B-1768 / DS2) (Halobacterium volcanii).